We begin with the raw amino-acid sequence, 225 residues long: Cytidylate kinase (225 aa).

12-20 (GPSGAGKGT) contacts ATP.

The protein belongs to the cytidylate kinase family. Type 1 subfamily.

Its subcellular location is the cytoplasm. It carries out the reaction CMP + ATP = CDP + ADP. The catalysed reaction is dCMP + ATP = dCDP + ADP. This Edwardsiella ictaluri (strain 93-146) protein is Cytidylate kinase.